Here is a 101-residue protein sequence, read N- to C-terminus: Co-chaperonin GroES (101 aa).

Belongs to the GroES chaperonin family. Heptamer of 7 subunits arranged in a ring. Interacts with the chaperonin GroEL.

It localises to the cytoplasm. Functionally, together with the chaperonin GroEL, plays an essential role in assisting protein folding. The GroEL-GroES system forms a nano-cage that allows encapsulation of the non-native substrate proteins and provides a physical environment optimized to promote and accelerate protein folding. GroES binds to the apical surface of the GroEL ring, thereby capping the opening of the GroEL channel. This Lawsonia intracellularis protein is Co-chaperonin GroES.